Consider the following 1254-residue polypeptide: Structural polyprotein (1254 aa).

The interval 1-33 is necessary for nucleocapsid assembly and virus assembly; sequence MFPFQPMYPMQPMPYRNPFAAPRRPWFPRTDPF. The interval 33–68 is host transcription inhibition; the sequence is FLAMQVQELTRSMANLTFKQRRGAPPEGPPAKKSKR. The Supraphysiological nuclear export signal motif lies at 41 to 48; sequence LTRSMANL. N47 carries N-linked (GlcNAc...) asparagine; by host glycosylation. Residues 48–118 form a disordered region; the sequence is LTFKQRRGAP…KKPGKRQRMV (71 aa). The Nuclear localization signal signature appears at 64 to 68; it reads KKSKR. A compositionally biased stretch (basic residues) spans 76 to 91; that stretch reads GGQRKKKKNEGKKKAK. A binding to the viral RNA region spans residues 90–126; the sequence is AKTGPPNLKTQNGNKKKTNKKPGKRQRMVMKLESDKT. 2 positions are modified to phosphothreonine: T92 and T107. Positions 103–117 are enriched in basic residues; that stretch reads NKKKTNKKPGKRQRM. A ribosome-binding region spans residues 111 to 125; sequence PGKRQRMVMKLESDK. S123 bears the Phosphoserine mark. Positions 125 to 274 constitute a Peptidase S3 domain; that stretch reads KTFPIMLEGK…KYTPENCEQW (150 aa). T126 bears the Phosphothreonine mark. The active-site Charge relay system is the H151. Residues 167–172 are interaction with spike glycoprotein E2; the sequence is KKASKY. Active-site charge relay system residues include D173 and S225. Residues 259–263 are interaction with spike glycoprotein E2; it reads EKGVT. The tract at residues 275–286 is functions as an uncleaved signal peptide for the precursor of protein E3/E2; the sequence is SLVTTMCLLANV. Topologically, residues 275 to 702 are extracellular; the sequence is SLVTTMCLLA…YHRYPMSTIT (428 aa). Intrachain disulfides connect C281–C290, C352–C456, C355–C360, C423–C437, C484–C599, C533–C559, and C535–C553. An N-linked (GlcNAc...) asparagine; by host glycan is attached at N285. Residues N545 and N651 are each glycosylated (N-linked (GlcNAc...) asparagine; by host). Residues 703–723 form a helical membrane-spanning segment; it reads GLSICAAIVAVSIAASTWLLC. An interaction with the capsid protein region spans residues 724-728; the sequence is RSRAS. The Cytoplasmic segment spans residues 724 to 756; the sequence is RSRASCLTPYRLTPNAKMPLCLAVLCCARSARA. Residues C729, C749, and C750 are each lipidated (S-palmitoyl cysteine; by host). The cysteines at positions 729 and 750 are disulfide-linked. Residues 735-754 form a transient transmembrane before p62-6K protein processing region; it reads LTPNAKMPLCLAVLCCARSA. At 757–768 the chain is on the extracellular side; it reads ETTWESLDHLWN. The helical transmembrane segment at 769–789 threads the bilayer; the sequence is NNQQMFWTQLLIPLAALIVVT. Position 790 (R790) is a topological domain, cytoplasmic. The chain crosses the membrane as a helical span at residues 791–811; it reads LLKCMCCVVPFLVVAGAAGAG. The Extracellular segment spans residues 812 to 1224; that stretch reads AYEHATTMPN…SKTAWTWLTS (413 aa). 4 disulfide bridges follow: C861–C926, C874–C906, C875–C908, and C880–C890. An E1 fusion peptide loop region spans residues 896-913; that stretch reads VYPFMWGGAYCFCDTENT. N-linked (GlcNAc...) asparagine; by host glycosylation is found at N946 and N1082. Disulfide bonds link C1071/C1083, C1113/C1188, C1118/C1192, and C1140/C1182. Residues 1225–1245 traverse the membrane as a helical segment; the sequence is LLGGSAVIIIIGLVLATLVAM. Over 1246 to 1254 the chain is Cytoplasmic; sequence YVLTNQKHN.

As to quaternary structure, homodimer. Homomultimer. Interacts with host karyopherin KPNA4; this interaction allows the nuclear import of the viral capsid protein. Interacts with spike glycoprotein E2. Interacts with host IRAK1; the interaction leads to inhibition of IRAK1-dependent signaling. Part of a tetrameric complex composed of host CRM1, host importin alpha/beta dimer and the viral capsid; this complex blocks the receptor-mediated transport through the nuclear pore. Interacts with host phosphatase PPP1CA; this interaction dephosphorylates the capsid protein, which increases its ability to bind to the viral genome. In terms of assembly, the precursor of protein E3/E2 and E1 form a heterodimer shortly after synthesis. Interacts with spike glycoprotein E2. The precursor of protein E3/E2 and E1 form a heterodimer shortly after synthesis. Processing of the precursor of protein E3/E2 into E2 and E3 results in a heterodimer of the spike glycoproteins E2 and E1. Spike at virion surface are constituted of three E2-E1 heterodimers. After target cell attachment and endocytosis, E1 change conformation to form homotrimers. Interacts with 6K protein. Interacts with host LDLRAD3; this interaction mediates viral entry to the host cell. As to quaternary structure, interacts with spike glycoprotein E1. Processing of the precursor of protein E3/E2 into E2 and E3 results in a heterodimer of the spike glycoproteins E2 and E1. Spike at virion surface are constituted of a trimer of E2-E1 heterodimers. Interacts with 6K protein. Interacts with host LDLRAD3; this interaction mediates viral entry to the host cell. In terms of assembly, oligomer. Interacts with spike glycoprotein E1. Interacts with spike glycoprotein E2. Post-translationally, structural polyprotein: Specific enzymatic cleavages in vivo yield mature proteins. Capsid protein is auto-cleaved during polyprotein translation, unmasking a signal peptide at the N-terminus of the precursor of E3/E2. The remaining polyprotein is then targeted to the host endoplasmic reticulum, where host signal peptidase cleaves it into pE2, 6K and E1 proteins. pE2 is further processed to mature E3 and E2 by host furin in trans-Golgi vesicle. In terms of processing, phosphorylated on serine and threonine residues. Palmitoylated via thioester bonds. These palmitoylations may induce disruption of the C-terminus transmembrane. This would result in the reorientation of E2 C-terminus from lumenal to cytoplasmic side. Post-translationally, N-glycosylated. In terms of processing, palmitoylated via thioester bonds.

The protein localises to the virion. It localises to the host cytoplasm. It is found in the host cell membrane. Its subcellular location is the host nucleus. The protein resides in the virion membrane. The protein localises to the host Golgi apparatus. It localises to the host trans-Golgi network. It is found in the host endoplasmic reticulum. The catalysed reaction is Autocatalytic release of the core protein from the N-terminus of the togavirus structural polyprotein by hydrolysis of a -Trp-|-Ser- bond.. Its function is as follows. Forms an icosahedral capsid with a T=4 symmetry composed of 240 copies of the capsid protein surrounded by a lipid membrane through which penetrate 80 spikes composed of trimers of E1-E2 heterodimers. The capsid protein binds to the viral RNA genome at a site adjacent to a ribosome binding site for viral genome translation following genome release. Possesses a protease activity that results in its autocatalytic cleavage from the nascent structural protein. Following its self-cleavage, the capsid protein transiently associates with ribosomes, and within several minutes the protein binds to viral RNA and rapidly assembles into icosahedric core particles. The resulting nucleocapsid eventually associates with the cytoplasmic domain of the spike glycoprotein E2 at the cell membrane, leading to budding and formation of mature virions. In case of infection, new virions attach to target cells and after clathrin-mediated endocytosis their membrane fuses with the host endosomal membrane. This leads to the release of the nucleocapsid into the cytoplasm, followed by an uncoating event necessary for the genomic RNA to become accessible. The uncoating might be triggered by the interaction of capsid proteins with ribosomes. Binding of ribosomes would release the genomic RNA since the same region is genomic RNA-binding and ribosome-binding. Specifically inhibits interleukin-1 receptor-associated kinase 1/IRAK1-dependent signaling during viral entry, representing a means by which the alphaviruses may evade innate immune detection and activation prior to viral gene expression. Inhibits host transcription. Forms a tetrameric complex with XPO1/CRM1 and the nuclear import receptor importin. This complex blocks the central channel of host nuclear pores thereby inhibiting the receptor-mediated nuclear transport and thus the host mRNA and rRNA transcription. The inhibition of transcription is linked to a cytopathic effect on the host cell. Functionally, provides the signal sequence for the translocation of the precursor of protein E3/E2 to the host endoplasmic reticulum. Furin-cleaved E3 remains associated with spike glycoprotein E1 and mediates pH protection of the latter during the transport via the secretory pathway. After virion release from the host cell, the assembly protein E3 is gradually released in the extracellular space. Plays a role in viral attachment to target host cell, by binding to the cell receptor LDLRAD3. Synthesized as a p62 precursor which is processed by furin at the cell membrane just before virion budding, giving rise to E2-E1 heterodimer. The p62-E1 heterodimer is stable, whereas E2-E1 is unstable and dissociate at low pH. p62 is processed at the last step, presumably to avoid E1 fusion activation before its final export to cell surface. E2 C-terminus contains a transitory transmembrane that would be disrupted by palmitoylation, resulting in reorientation of the C-terminal tail from lumenal to cytoplasmic side. This step is critical since E2 C-terminus is involved in budding by interacting with capsid proteins. This release of E2 C-terminus in cytoplasm occurs lately in protein export, and precludes premature assembly of particles at the endoplasmic reticulum membrane. In terms of biological role, acts as a viroporin that participates in virus glycoprotein processing and transport to the plasma membrane, cell permeabilization and budding of viral particles. Disrupts the calcium homeostasis of the cell, probably at the endoplasmic reticulum level. This leads to cytoplasmic calcium elevation. Because of its lipophilic properties, the 6K protein is postulated to influence the selection of lipids that interact with the transmembrane domains of the glycoproteins, which, in turn, affects the deformability of the bilayer required for the extreme curvature that occurs as budding proceeds. Present in low amount in virions, about 3% compared to viral glycoproteins. Its function is as follows. Class II viral fusion protein. Fusion activity is inactive as long as E1 is bound to E2 in mature virion. After virus attachment to cell receptor LDLRAD3 and endocytosis, acidification of the endosome induce dissociation of E1/E2 heterodimer and concomitant trimerization of the E1 subunits. This E1 trimer is fusion active, and promotes release of viral nucleocapsid in cytoplasm after endosome and viral membrane fusion. Efficient fusion requires the presence of cholesterol and sphingolipid in the target membrane. This is Structural polyprotein from Venezuelan equine encephalitis virus (strain Everglades Fe3-7c) (VEEV).